We begin with the raw amino-acid sequence, 779 residues long: Cell division control protein 4 (779 aa).

A disordered region spans residues 39-80; that stretch reads AGTHRNSSTAKTVETEDGEEDIDEYQRKRAAGSGESTPERSD. The short motif at 82 to 85 is the Nuclear localization signal element; the sequence is KRVK. Phosphoserine is present on Ser104. The 48-residue stretch at 272–319 folds into the F-box domain; it reads RDLITSLPFEISLKIFNYLQFEDIINSLGVSQNWNKIIRKSTSLWKKL. 7 WD repeats span residues 380–408, 420–449, 461–493, 528–556, 568–598, 630–658, and 669–698; these read HMTS…RVYD, GHDG…RVWD, GHNS…HVWK, GHMA…IVWD, GHTD…RIWD, GHTA…RGWD, and HHTN…NIYN.

In terms of assembly, interacts with DCD53 and SKP1. Component of the SCF(CDC4) complex containing CDC53, SKP1, RBX1 and CDC4. CDC34. Interacts with CDC6 and CIC1. Interacts with SIC1; the interaction involves a SIC1 double phosphorylated motif (degron). Homodimerizes; the dimerization increases SIC1 ubiquitination in vitro.

Its subcellular location is the nucleus. It functions in the pathway protein modification; protein ubiquitination. Substrate recognition component of a SCF (SKP1-CUL1-F-box protein) E3 ubiquitin-protein ligase complex which mediates the ubiquitination and subsequent proteasomal degradation of target proteins. Recognizes and binds to phosphorylated target proteins. Directs ubiquitination of the phosphorylated CDK inhibitor SIC1. Involved in the degradation of CDC6 together with CDC34/UBC3 and CDC53, and in restricting the degradation of FAR1 to the nucleus. Is essential for initiation of DNA replication and separation of the spindle pole bodies to form the poles of the mitotic spindle. It also plays a role in bud development, fusion of zygotic nuclei after conjugation and various aspects of sporulation. Required for HTA1-HTB1 locus transcription activation. Required for G1/S and G2/M transition. This Saccharomyces cerevisiae (strain ATCC 204508 / S288c) (Baker's yeast) protein is Cell division control protein 4 (CDC4).